Reading from the N-terminus, the 341-residue chain is Alpha-ketoglutarate-dependent dioxygenase oryG (341 aa).

H100 is a substrate binding site. 2 residues coordinate Fe cation: H140 and D142. Position 167 (T167) interacts with 2-oxoglutarate. H299 serves as a coordination point for Fe cation. Residues R311 and R315 each contribute to the 2-oxoglutarate site. R315 is a substrate binding site.

This sequence belongs to the TfdA dioxygenase family. Fe(2+) is required as a cofactor.

The protein operates within secondary metabolite biosynthesis. Its function is as follows. Alpha-ketoglutarate-dependent dioxygenase; part of the gene cluster that mediates the biosynthesis of oryzines, natural products with an unusual maleidride backbone. The two subunits of the fungal fatty acid synthase oryfasA and oryfasB probably form octenoic acid. This fatty acid is most likely activated by the acyl-CoA ligase oryP to give octenyl-CoA before the citrate synthase-like protein oryE catalyzes condensation with oxaloacetate to form tricarboxylic acid. The next steps of the pathways are conjectural, but a favorite possible route has been proposed, beginning with decarboxylation and concomitant dehydration by the decarboxylase oryM, followed by tautomerization, which may lead to the production of a diene intermediate. Reduction of this diene intermediate could give the known metabolite piliformic acid. On the pathway to oryzine B and oryzine A, however, hydroxylation of the diene by the alpha-ketoglutarate-dependent dioxygenase oryG and lactonisation by the lactonohydrolases oryH or oryL could give oryzine B directly. Finally, enoyl reduction by the dehydrogenase oryD would then convert oryzine B into oryzine A. The sequence is that of Alpha-ketoglutarate-dependent dioxygenase oryG from Aspergillus oryzae (strain ATCC 42149 / RIB 40) (Yellow koji mold).